Reading from the N-terminus, the 53-residue chain is ATP synthase protein 8 (53 aa).

Residues 4–24 form a helical membrane-spanning segment; that stretch reads MAPISWLLLFIVFSITFILFC.

The protein belongs to the ATPase protein 8 family. As to quaternary structure, F-type ATPases have 2 components, CF(1) - the catalytic core - and CF(0) - the membrane proton channel.

It is found in the mitochondrion membrane. In terms of biological role, mitochondrial membrane ATP synthase (F(1)F(0) ATP synthase or Complex V) produces ATP from ADP in the presence of a proton gradient across the membrane which is generated by electron transport complexes of the respiratory chain. F-type ATPases consist of two structural domains, F(1) - containing the extramembraneous catalytic core and F(0) - containing the membrane proton channel, linked together by a central stalk and a peripheral stalk. During catalysis, ATP synthesis in the catalytic domain of F(1) is coupled via a rotary mechanism of the central stalk subunits to proton translocation. Part of the complex F(0) domain. Minor subunit located with subunit a in the membrane. This chain is ATP synthase protein 8 (mt:ATPase8), found in Drosophila yakuba (Fruit fly).